The sequence spans 85 residues: Large ribosomal subunit protein bL27 (85 aa).

The segment covering 1-10 (MAQKKGGGST) has biased composition (gly residues). The segment at 1-20 (MAQKKGGGSTRNGRDSQPKM) is disordered.

Belongs to the bacterial ribosomal protein bL27 family.

The sequence is that of Large ribosomal subunit protein bL27 from Methylibium petroleiphilum (strain ATCC BAA-1232 / LMG 22953 / PM1).